The following is a 182-amino-acid chain: Heat shock protein beta-2 (182 aa).

Positions 55 to 163 (PAGEGSRAGA…DTEVNEVYIS (109 aa)) constitute a sHSP domain.

This sequence belongs to the small heat shock protein (HSP20) family. In terms of assembly, interacts with DMPK; may enhance its kinase activity. As to expression, expressed preferentially in skeletal muscle and heart but not in the lens.

It localises to the cytoplasm. It is found in the nucleus. In terms of biological role, may regulate the kinase DMPK. The protein is Heat shock protein beta-2 (HSPB2) of Homo sapiens (Human).